We begin with the raw amino-acid sequence, 73 residues long: DNA-binding protein S1FA3 (73 aa).

Positions 47–52 match the Nuclear localization signal motif; the sequence is PPRKKK. Over residues 47–63 the composition is skewed to basic residues; that stretch reads PPRKKKPVSKKKMKKEK. Residues 47–73 form a disordered region; that stretch reads PPRKKKPVSKKKMKKEKMKQGVQVPGE.

It belongs to the S1FA transcription factor family.

Its subcellular location is the nucleus. In terms of biological role, DNA-binding protein that specifically recognizes a negative element (S1F) within the RPS1 promoter. This is DNA-binding protein S1FA3 (S1FA3) from Arabidopsis thaliana (Mouse-ear cress).